A 207-amino-acid polypeptide reads, in one-letter code: MLRVLGLAGMLMSFNIHAAMISPVSGVKILFANGTEVDEPLEPMEVDAKSAQLVVRYAAELGSGSNQKVFDSAPFVITIDNLSEDIKLYPPKVFSYEQANREFNTSPKWRIEGVSGKEISYSQEKLKGNEGFMPYYGMEALIAKHNEERGIVFSAGVVKAEVVTTDKMVEKPATTKNADALVQLQHWYKQASTEERKAFRKWMVDQE.

A signal peptide spans 1–18 (MLRVLGLAGMLMSFNIHA).

The protein belongs to the UPF0319 family.

This Vibrio vulnificus (strain CMCP6) protein is UPF0319 protein VV1_2115.